Consider the following 251-residue polypeptide: MERGTASGGASLLKEFHPVQTLQQVENYTALSERASEYLLAVIRSKPNAVICLATGATPLLTYHYLVEKIHQQQVDVSQLTFVKLDEWVDLPLTMPGTCETFLQQHIVQPLGLREDQLISFRSEEINETECERVTNLIARKGGLDLCVLGLGKNGHLGLNEPGESLQPACHISQLDARTQQHEMLKTAGRPVTRGITLGLKDILNAREVLLLVTGEGKQDATDRFLTAKVSTAIPASFLWLHSNFICLINT.

The active-site Proton acceptor; for enolization step is Asp-86. Asn-154 serves as the catalytic For ring-opening step. Catalysis depends on His-156, which acts as the Proton acceptor; for ring-opening step. Glu-161 serves as the catalytic For ring-opening step.

It belongs to the glucosamine/galactosamine-6-phosphate isomerase family.

This Escherichia coli (strain K12) protein is Putative deaminase AgaI (agaI).